A 264-amino-acid chain; its full sequence is 1-(5-phosphoribosyl)-5-[(5-phosphoribosylamino)methylideneamino] imidazole-4-carboxamide isomerase (264 aa).

The protein belongs to the HisA/HisF family.

It is found in the cytoplasm. It carries out the reaction 1-(5-phospho-beta-D-ribosyl)-5-[(5-phospho-beta-D-ribosylamino)methylideneamino]imidazole-4-carboxamide = 5-[(5-phospho-1-deoxy-D-ribulos-1-ylimino)methylamino]-1-(5-phospho-beta-D-ribosyl)imidazole-4-carboxamide. Its pathway is amino-acid biosynthesis; L-histidine biosynthesis; L-histidine from 5-phospho-alpha-D-ribose 1-diphosphate: step 4/9. In Yarrowia lipolytica (strain CLIB 122 / E 150) (Yeast), this protein is 1-(5-phosphoribosyl)-5-[(5-phosphoribosylamino)methylideneamino] imidazole-4-carboxamide isomerase (HIS6).